Consider the following 181-residue polypeptide: UPF0215 protein AF_1433 (181 aa).

It belongs to the UPF0215 family.

The chain is UPF0215 protein AF_1433 from Archaeoglobus fulgidus (strain ATCC 49558 / DSM 4304 / JCM 9628 / NBRC 100126 / VC-16).